Consider the following 132-residue polypeptide: D-ribose pyranase (132 aa).

H20 serves as the catalytic Proton donor. Residues D28, H99, and 121-123 (YSN) contribute to the substrate site.

Belongs to the RbsD / FucU family. RbsD subfamily. In terms of assembly, homodecamer.

Its subcellular location is the cytoplasm. The enzyme catalyses beta-D-ribopyranose = beta-D-ribofuranose. It functions in the pathway carbohydrate metabolism; D-ribose degradation; D-ribose 5-phosphate from beta-D-ribopyranose: step 1/2. Its function is as follows. Catalyzes the interconversion of beta-pyran and beta-furan forms of D-ribose. In Pseudomonas putida (strain W619), this protein is D-ribose pyranase.